The chain runs to 426 residues: Chaperone SurA (426 aa).

A signal peptide spans 1 to 13 (MLGALFLSTAASA). PpiC domains are found at residues 164–265 (SEEL…KLLD) and 274–373 (RDEV…EVLG).

It is found in the periplasm. The enzyme catalyses [protein]-peptidylproline (omega=180) = [protein]-peptidylproline (omega=0). Chaperone involved in the correct folding and assembly of outer membrane proteins. Recognizes specific patterns of aromatic residues and the orientation of their side chains, which are found more frequently in integral outer membrane proteins. May act in both early periplasmic and late outer membrane-associated steps of protein maturation. The polypeptide is Chaperone SurA (Pseudomonas fluorescens (strain ATCC BAA-477 / NRRL B-23932 / Pf-5)).